We begin with the raw amino-acid sequence, 118 residues long: Ribonuclease P protein component (118 aa).

This sequence belongs to the RnpA family. Consists of a catalytic RNA component (M1 or rnpB) and a protein subunit.

It carries out the reaction Endonucleolytic cleavage of RNA, removing 5'-extranucleotides from tRNA precursor.. RNaseP catalyzes the removal of the 5'-leader sequence from pre-tRNA to produce the mature 5'-terminus. It can also cleave other RNA substrates such as 4.5S RNA. The protein component plays an auxiliary but essential role in vivo by binding to the 5'-leader sequence and broadening the substrate specificity of the ribozyme. In Shewanella denitrificans (strain OS217 / ATCC BAA-1090 / DSM 15013), this protein is Ribonuclease P protein component.